The chain runs to 410 residues: Dephospho-CoA kinase (410 aa).

In terms of domain architecture, DPCK spans 3–201 (CIGITGGIGA…HRILPFAYNL (199 aa)). 11 to 16 (GAGKSL) is an ATP binding site. Positions 196–410 (PFAYNLSQRQ…EWADSTGWRL (215 aa)) are UPF0157.

The protein in the N-terminal section; belongs to the CoaE family. This sequence in the C-terminal section; belongs to the UPF0157 (GrpB) family.

Its subcellular location is the cytoplasm. It carries out the reaction 3'-dephospho-CoA + ATP = ADP + CoA + H(+). Its pathway is cofactor biosynthesis; coenzyme A biosynthesis; CoA from (R)-pantothenate: step 5/5. Catalyzes the phosphorylation of the 3'-hydroxyl group of dephosphocoenzyme A to form coenzyme A. The sequence is that of Dephospho-CoA kinase from Mycobacterium leprae (strain TN).